Consider the following 166-residue polypeptide: Protein FAM89A (166 aa).

The protein belongs to the FAM89 family.

The sequence is that of Protein FAM89A (fam89a) from Xenopus laevis (African clawed frog).